We begin with the raw amino-acid sequence, 236 residues long: Orotidine 5'-phosphate decarboxylase (236 aa).

Substrate is bound by residues D17, K39, 66 to 75 (DLKFHDIPNT), T125, R186, Q195, G215, and R216. The active-site Proton donor is K68.

It belongs to the OMP decarboxylase family. Type 1 subfamily. As to quaternary structure, homodimer.

The enzyme catalyses orotidine 5'-phosphate + H(+) = UMP + CO2. The protein operates within pyrimidine metabolism; UMP biosynthesis via de novo pathway; UMP from orotate: step 2/2. Catalyzes the decarboxylation of orotidine 5'-monophosphate (OMP) to uridine 5'-monophosphate (UMP). In Buchnera aphidicola subsp. Acyrthosiphon pisum (strain APS) (Acyrthosiphon pisum symbiotic bacterium), this protein is Orotidine 5'-phosphate decarboxylase.